A 217-amino-acid chain; its full sequence is Thiamine-phosphate synthase (217 aa).

Residues 39–43 (QLRRK) and N71 each bind 4-amino-2-methyl-5-(diphosphooxymethyl)pyrimidine. Mg(2+) contacts are provided by D72 and D91. S110 serves as a coordination point for 4-amino-2-methyl-5-(diphosphooxymethyl)pyrimidine. 137-139 (SPT) provides a ligand contact to 2-[(2R,5Z)-2-carboxy-4-methylthiazol-5(2H)-ylidene]ethyl phosphate. Position 140 (K140) interacts with 4-amino-2-methyl-5-(diphosphooxymethyl)pyrimidine. Residues G173 and 193 to 194 (IS) contribute to the 2-[(2R,5Z)-2-carboxy-4-methylthiazol-5(2H)-ylidene]ethyl phosphate site.

It belongs to the thiamine-phosphate synthase family. Mg(2+) serves as cofactor.

It catalyses the reaction 2-[(2R,5Z)-2-carboxy-4-methylthiazol-5(2H)-ylidene]ethyl phosphate + 4-amino-2-methyl-5-(diphosphooxymethyl)pyrimidine + 2 H(+) = thiamine phosphate + CO2 + diphosphate. The catalysed reaction is 2-(2-carboxy-4-methylthiazol-5-yl)ethyl phosphate + 4-amino-2-methyl-5-(diphosphooxymethyl)pyrimidine + 2 H(+) = thiamine phosphate + CO2 + diphosphate. The enzyme catalyses 4-methyl-5-(2-phosphooxyethyl)-thiazole + 4-amino-2-methyl-5-(diphosphooxymethyl)pyrimidine + H(+) = thiamine phosphate + diphosphate. Its pathway is cofactor biosynthesis; thiamine diphosphate biosynthesis; thiamine phosphate from 4-amino-2-methyl-5-diphosphomethylpyrimidine and 4-methyl-5-(2-phosphoethyl)-thiazole: step 1/1. Its function is as follows. Condenses 4-methyl-5-(beta-hydroxyethyl)thiazole monophosphate (THZ-P) and 2-methyl-4-amino-5-hydroxymethyl pyrimidine pyrophosphate (HMP-PP) to form thiamine monophosphate (TMP). In Bordetella parapertussis (strain 12822 / ATCC BAA-587 / NCTC 13253), this protein is Thiamine-phosphate synthase.